The sequence spans 388 residues: Succinyl-diaminopimelate desuccinylase (388 aa).

Histidine 74 is a binding site for Zn(2+). Aspartate 76 is a catalytic residue. Aspartate 107 lines the Zn(2+) pocket. Catalysis depends on glutamate 142, which acts as the Proton acceptor. Residues glutamate 143, glutamate 171, and histidine 360 each contribute to the Zn(2+) site.

Belongs to the peptidase M20A family. DapE subfamily. As to quaternary structure, homodimer. Zn(2+) is required as a cofactor. Requires Co(2+) as cofactor.

It carries out the reaction N-succinyl-(2S,6S)-2,6-diaminopimelate + H2O = (2S,6S)-2,6-diaminopimelate + succinate. It participates in amino-acid biosynthesis; L-lysine biosynthesis via DAP pathway; LL-2,6-diaminopimelate from (S)-tetrahydrodipicolinate (succinylase route): step 3/3. In terms of biological role, catalyzes the hydrolysis of N-succinyl-L,L-diaminopimelic acid (SDAP), forming succinate and LL-2,6-diaminopimelate (DAP), an intermediate involved in the bacterial biosynthesis of lysine and meso-diaminopimelic acid, an essential component of bacterial cell walls. The protein is Succinyl-diaminopimelate desuccinylase of Rhodopseudomonas palustris (strain BisB5).